Consider the following 419-residue polypeptide: Histidine--tRNA ligase (419 aa).

It belongs to the class-II aminoacyl-tRNA synthetase family. Homodimer.

It localises to the cytoplasm. It catalyses the reaction tRNA(His) + L-histidine + ATP = L-histidyl-tRNA(His) + AMP + diphosphate + H(+). In Desulforamulus reducens (strain ATCC BAA-1160 / DSM 100696 / MI-1) (Desulfotomaculum reducens), this protein is Histidine--tRNA ligase.